Here is a 156-residue protein sequence, read N- to C-terminus: Small ribosomal subunit protein uS7 (156 aa).

Belongs to the universal ribosomal protein uS7 family. In terms of assembly, part of the 30S ribosomal subunit. Contacts proteins S9 and S11.

Functionally, one of the primary rRNA binding proteins, it binds directly to 16S rRNA where it nucleates assembly of the head domain of the 30S subunit. Is located at the subunit interface close to the decoding center, probably blocks exit of the E-site tRNA. The sequence is that of Small ribosomal subunit protein uS7 from Thermosynechococcus vestitus (strain NIES-2133 / IAM M-273 / BP-1).